A 709-amino-acid polypeptide reads, in one-letter code: Coiled-coil domain-containing protein 13 (709 aa).

Coiled-coil stretches lie at residues 70 to 97 (IFEK…NGRL), 139 to 178 (ELSK…ASAK), and 206 to 288 (EVKA…QRQN). Serine 258 is subject to Phosphoserine. A disordered region spans residues 281–312 (KQLGQRQNKPAGSSSSEVPLSSDSRKMTAQEK). Residues 293-302 (SSSSEVPLSS) show a composition bias toward low complexity. The stretch at 323–457 (DKQESWEKLA…ELEIGQLSVQ (135 aa)) forms a coiled coil. Disordered stretches follow at residues 462 to 499 (KGGG…LGSS), 512 to 542 (SALT…QAQA), and 600 to 641 (KMRL…SSTQ). A phosphoserine mark is found at serine 469 and serine 532. Residues 539–604 (QAQAAEMKAL…EQHLEKMRLE (66 aa)) are a coiled coil.

In terms of assembly, interacts with PCM1, CEP290 and PCNT.

It is found in the cytoplasm. The protein resides in the cytoskeleton. The protein localises to the microtubule organizing center. Its subcellular location is the centrosome. It localises to the centriolar satellite. It is found in the cilium basal body. In terms of biological role, required for primary cilia formation and promotes the localization of the ciliopathy protein BBS4 to both centriolar satellites and cilia. This is Coiled-coil domain-containing protein 13 from Mus musculus (Mouse).